A 314-amino-acid polypeptide reads, in one-letter code: Epithelial-stromal interaction protein 1 (314 aa).

Disordered stretches follow at residues 1–72, 227–272, and 289–314; these read MYTR…PNES, WAGS…RAQI, and QGKSQPGGLEQSGGCCNMNSTDSWGL. The span at 18 to 30 shows a compositional bias: basic and acidic residues; sequence SRDHAGAGQRREL. S39 carries the phosphoserine modification. The stretch at 71 to 180 forms a coiled coil; that stretch reads ESRRQKIQRI…QEDIRRATFR (110 aa). Residues 232-272 are compositionally biased toward basic and acidic residues; the sequence is AHRDSPQKEDNPRLQKTRDGHQKNKLLETKGQHQEEERAQI. Positions 305 to 314 are enriched in polar residues; it reads NMNSTDSWGL.

Expressed in the spleen, with expression in T cells, B cells, natural killer cells and natural killer T cells and high expression in monocytes and macrophages.

Functionally, plays a role in M1 macrophage polarization and is required for the proper regulation of gene expression during M1 versus M2 macrophage differentiation. Might play a role in RELA/p65 and STAT1 phosphorylation and nuclear localization upon activation of macrophages. This Mus musculus (Mouse) protein is Epithelial-stromal interaction protein 1 (Epsti1).